The sequence spans 2039 residues: Calcium-channel protein CCH1 (2039 aa).

2 disordered regions span residues 1–171 and 206–288; these read MQGR…PPRS and PQLK…PQKE. The segment covering 64 to 80 has biased composition (basic and acidic residues); it reads STEEKKGDEYNGNDKDS. N98 carries an N-linked (GlcNAc...) asparagine glycan. Composition is skewed to low complexity over residues 122–132 and 147–164; these read SPSTKSAKSSS and FSSY…SPSS. The segment covering 209-226 has biased composition (basic and acidic residues); it reads KSEKSRPVSDVGEDRGEG. N-linked (GlcNAc...) asparagine glycans are attached at residues N257 and N269. Positions 271-281 are enriched in basic residues; the sequence is SRKKPSPKFFH. S284 carries the phosphoserine modification. The helical transmembrane segment at 346-366 threads the bilayer; the sequence is YSLLYNTLLTFYAILLAIRTY. N-linked (GlcNAc...) asparagine glycosylation occurs at N379. Residues 384-404 form a helical membrane-spanning segment; sequence FIFILSACFTGNDIAKIIAFG. An N-linked (GlcNAc...) asparagine glycan is attached at N559. 3 helical membrane passes run 563-583, 658-678, and 691-711; these read MLVY…QGSF, IVNS…TDLM, and LFFI…LIAV. Residues N754 and N760 are each glycosylated (N-linked (GlcNAc...) asparagine). 3 consecutive transmembrane segments (helical) span residues 766–786, 809–829, and 841–861; these read LAIY…DIGM, ISIV…PNMW, and FIIS…VLGH. 2 N-linked (GlcNAc...) asparagine glycosylation sites follow: N882 and N900. A run of 2 helical transmembrane segments spans residues 904–924 and 942–962; these read FYFF…EGVI and SFLS…LYAL. Residue N968 is glycosylated (N-linked (GlcNAc...) asparagine). The chain crosses the membrane as a helical span at residues 978–998; that stretch reads FFIIWFLLSNSVILNIFIALI. N1153 is a glycosylation site (N-linked (GlcNAc...) asparagine). The helical transmembrane segment at 1207-1227 threads the bilayer; it reads VFVFIFALATILLIVCSCYVT. N-linked (GlcNAc...) asparagine glycosylation is present at N1240. 2 helical membrane passes run 1247 to 1267 and 1277 to 1297; these read CAFI…DGFI and PWNF…IAYL. A glycan (N-linked (GlcNAc...) asparagine) is linked at N1302. The next 2 membrane-spanning stretches (helical) occupy residues 1340 to 1360 and 1408 to 1428; these read IFEA…WGLS and FASA…VDLL. N-linked (GlcNAc...) asparagine glycosylation is present at N1433. A run of 5 helical transmembrane segments spans residues 1452-1472, 1529-1549, 1554-1574, 1596-1616, and 1618-1638; these read FLVL…VSFI, NFYY…MLLS, PGNL…VFLI, IRLS…HVPA, and HYWF…FIIP. Residue N1640 is glycosylated (N-linked (GlcNAc...) asparagine). Residues 1654 to 1674 form a helical membrane-spanning segment; it reads LPPILSLTYTWGVLFLVYAIA. N-linked (GlcNAc...) asparagine glycosylation is found at N1687 and N1732. The helical transmembrane segment at 1748–1768 threads the bilayer; the sequence is LMSWNIISMYIFVNMFVSLII. Residues N1770 and N1785 are each glycosylated (N-linked (GlcNAc...) asparagine). In terms of domain architecture, EF-hand spans 1787–1822; that stretch reads SEIKKYIEAWSKFDTDGTGELELSYLPRIMHSFDGP. Residues 2011 to 2039 are disordered; the sequence is PRMNQDSTMEPPEEPIDNNDDSANDLIDR. Positions 2021–2033 are enriched in acidic residues; it reads PPEEPIDNNDDSA.

It belongs to the calcium channel alpha-1 subunit (TC 1.A.1.11) family. As to quaternary structure, interacts with MID1 to form a Ca(2+) influx channel.

The protein localises to the cell membrane. In terms of biological role, voltage-gated, high-affinity calcium channel that functions together with MID1 to mediate calcium entry into cells. Required during conditions of environmental stress. The protein is Calcium-channel protein CCH1 (CCH1) of Saccharomyces cerevisiae (strain ATCC 204508 / S288c) (Baker's yeast).